The primary structure comprises 178 residues: NADH-ubiquinone oxidoreductase chain 6 (178 aa).

Transmembrane regions (helical) follow at residues Met-1–Ser-21, Ser-25–Leu-45, Gly-48–Phe-68, Val-89–Leu-109, and Tyr-152–Met-172.

Belongs to the complex I subunit 6 family.

The protein resides in the mitochondrion membrane. It catalyses the reaction a ubiquinone + NADH + 5 H(+)(in) = a ubiquinol + NAD(+) + 4 H(+)(out). In terms of biological role, core subunit of the mitochondrial membrane respiratory chain NADH dehydrogenase (Complex I) that is believed to belong to the minimal assembly required for catalysis. Complex I functions in the transfer of electrons from NADH to the respiratory chain. The immediate electron acceptor for the enzyme is believed to be ubiquinone. This chain is NADH-ubiquinone oxidoreductase chain 6 (MT-ND6), found in Pseudosoriculus fumidus (Taiwanese brown-toothed shrew).